The primary structure comprises 86 residues: Large ribosomal subunit protein bL27 (86 aa).

The tract at residues 1 to 24 (MAHKKGTGSTRNGRDSNSKRLGVK) is disordered.

The protein belongs to the bacterial ribosomal protein bL27 family.

The protein is Large ribosomal subunit protein bL27 of Prochlorococcus marinus (strain MIT 9301).